We begin with the raw amino-acid sequence, 424 residues long: Serpin E3 (424 aa).

Residues 1 to 20 (MPPFLITLFLFHSCCLRANG) form the signal peptide. Asparagine 46 carries N-linked (GlcNAc...) asparagine glycosylation. The disordered stretch occupies residues 143–174 (DLSEPNSTAIQTSEGASRETAGGGPSEGPGGW). Polar residues predominate over residues 146–157 (EPNSTAIQTSEG). Residues 163-173 (AGGGPSEGPGG) show a composition bias toward gly residues.

The protein belongs to the serpin family.

It is found in the secreted. In terms of biological role, probable serine protease inhibitor. In Homo sapiens (Human), this protein is Serpin E3 (SERPINE3).